Here is a 125-residue protein sequence, read N- to C-terminus: Fluoride-specific ion channel FluC (125 aa).

4 consecutive transmembrane segments (helical) span residues 1–21 (MIQA…RYYV), 32–52 (AFPW…GVFA), 68–88 (LLIT…LDAI), and 101–121 (IYIA…LAVM). Residues Gly75 and Thr78 each contribute to the Na(+) site.

Belongs to the fluoride channel Fluc/FEX (TC 1.A.43) family.

Its subcellular location is the cell inner membrane. The enzyme catalyses fluoride(in) = fluoride(out). Its activity is regulated as follows. Na(+) is not transported, but it plays an essential structural role and its presence is essential for fluoride channel function. Its function is as follows. Fluoride-specific ion channel. Important for reducing fluoride concentration in the cell, thus reducing its toxicity. The chain is Fluoride-specific ion channel FluC from Rhizobium etli (strain CIAT 652).